The chain runs to 461 residues: Homocitrate synthase (461 aa).

A Pyruvate carboxyltransferase domain is found at 4–259 (VGILDSTLRE…IEVVKLDKLQ (256 aa)). Arg-12 contacts 2-oxoglutarate. Glu-13 provides a ligand contact to Mg(2+). 3 residues coordinate 2-oxoglutarate: His-76, Arg-136, and Thr-170. Mg(2+) is bound by residues His-198 and His-200. Residue His-292 is the Proton acceptor of the active site.

The protein belongs to the alpha-IPM synthase/homocitrate synthase family. Homocitrate synthase LYS20/LYS21 subfamily. The cofactor is Mg(2+). Mn(2+) serves as cofactor.

It carries out the reaction acetyl-CoA + 2-oxoglutarate + H2O = (2R)-homocitrate + CoA + H(+). The protein operates within amino-acid biosynthesis; L-lysine biosynthesis via AAA pathway; L-alpha-aminoadipate from 2-oxoglutarate: step 1/5. Its function is as follows. Catalyzes the aldol-type condensation of 2-oxoglutarate with acetyl-CoA to yield homocitrate. Carries out the first step of the alpha-aminoadipate (AAA) lysine biosynthesis pathway. The protein is Homocitrate synthase of Saccharolobus islandicus (strain Y.N.15.51 / Yellowstone #2) (Sulfolobus islandicus).